The chain runs to 312 residues: Glyceraldehyde-3-phosphate dehydrogenase, cytosolic (312 aa).

NAD(+) contacts are provided by residues 5–6 (RI) and D27. Residues 144 to 146 (SCT), T175, 204 to 205 (TG), and R227 contribute to the D-glyceraldehyde 3-phosphate site. C145 (nucleophile) is an active-site residue. An NAD(+)-binding site is contributed by N309.

Belongs to the glyceraldehyde-3-phosphate dehydrogenase family. In terms of assembly, homotetramer.

The protein localises to the cytoplasm. The enzyme catalyses D-glyceraldehyde 3-phosphate + phosphate + NAD(+) = (2R)-3-phospho-glyceroyl phosphate + NADH + H(+). It participates in carbohydrate degradation; glycolysis; pyruvate from D-glyceraldehyde 3-phosphate: step 1/5. Its function is as follows. Key enzyme in glycolysis that catalyzes the first step of the pathway by converting D-glyceraldehyde 3-phosphate (G3P) into 3-phospho-D-glyceroyl phosphate. Essential for the maintenance of cellular ATP levels and carbohydrate metabolism. This Scenedesmus vacuolatus (Green alga) protein is Glyceraldehyde-3-phosphate dehydrogenase, cytosolic (GapC).